The primary structure comprises 346 residues: Enkurin domain-containing protein 1 (346 aa).

3 disordered regions span residues 1–24 (MCEGPSRISGPIPPDPTLCPDYYR), 88–107 (SGVSPKRKNPKDHEKENLRR), and 113–132 (RRFQDQERSREQGQPKPLKA). S91 is subject to Phosphoserine. 2 stretches are compositionally biased toward basic and acidic residues: residues 98–107 (KDHEKENLRR) and 113–125 (RRFQDQERSREQG). A Phosphoserine modification is found at S136. One can recognise an Enkurin domain in the interval 251–343 (ERRDLWRKEA…IFSRPKVFVK (93 aa)). Positions 259-280 (EAEARQRSQPDPSMPPGHTLMP) are disordered.

Interacts with alpha-tubulin. Interacts (via central region) with CCP110 (via N-terminal region); competes with CEP97 for binding to CCP110. As to expression, widely expressed with highest levels in testis and lung.

It is found in the cytoplasm. It localises to the cytoskeleton. The protein localises to the microtubule organizing center. Its subcellular location is the centrosome. The protein resides in the centriole. It is found in the cilium basal body. It localises to the cell projection. The protein localises to the cilium. Its subcellular location is the spindle. The protein resides in the spindle pole. It is found in the cilium axoneme. Its function is as follows. Microtubule-binding protein which regulates microtubule organization and stability. Promotes the stability of astral microtubules and facilitates the proper orientation of the mitotic spindle. This allows the oriented division of basal keratinocytes and contributes to epidermal stratification. Required for the assembly of both primary and motile cilia. Destabilizes the interaction between CCP110 and CEP97 by competing with CEP97 for binding to CCP110 which promotes the removal of CCP110 and CEP97 from the mother centriole and allows the initiation of ciliogenesis. In Mus musculus (Mouse), this protein is Enkurin domain-containing protein 1 (Enkd1).